Consider the following 902-residue polypeptide: Probable leucine--tRNA ligase, mitochondrial (902 aa).

The residue at position 67 (Lys-67) is an N6-acetyllysine. The 'HIGH' region signature appears at Tyr-91–Val-101. N6-acetyllysine is present on Lys-235. The short motif at Lys-638–Ser-642 is the 'KMSKS' region element. Lys-641 contacts ATP.

It belongs to the class-I aminoacyl-tRNA synthetase family.

The protein localises to the mitochondrion matrix. It catalyses the reaction tRNA(Leu) + L-leucine + ATP = L-leucyl-tRNA(Leu) + AMP + diphosphate. The sequence is that of Probable leucine--tRNA ligase, mitochondrial (Lars2) from Mus musculus (Mouse).